The chain runs to 1082 residues: RE1-silencing transcription factor (1082 aa).

Residues 32 to 117 (DLHELSKAEL…SLELSAVEPQ (86 aa)) are interaction with SIN3A. The segment at 43–57 (APQLIMLANVALTGE) is interaction with SIN3B. The tract at residues 140–413 (PVAEDKCRSS…KSKHPTCPSK (274 aa)) is interaction with ZFP90. The segment at 154–176 (FRCKPCQYEAESEEQFVHHIRIH) adopts a C2H2-type 1 zinc-finger fold. Residues 196-207 (SGSSPAEEGEFS) are required for binding to the neuron-restrictive silencer element. 7 C2H2-type zinc fingers span residues 211 to 235 (IRCD…HHLR), 243 to 265 (YKCI…LRNH), 271 to 293 (YTCS…VRTH), 299 to 321 (YKCE…MRTH), 327 to 350 (FKCD…RQVH), 356 to 378 (LNCP…VELH), and 384 to 407 (FNCP…KSKH). Disordered stretches follow at residues 408 to 809 (PTCP…ELSL) and 831 to 1027 (SKLL…KAGL). Over residues 440–475 (EKMENEQTKTKGDVSGKKNEKPVKAVGKDASKEKKP) the composition is skewed to basic and acidic residues. Residues 477–497 (SSVSVVQVTTRTRKSAVAAET) are compositionally biased toward low complexity. The segment covering 581–597 (KGTKKTPPKTKTSKKGG) has biased composition (basic residues). Residues 630–640 (VTGSGSSQTEL) show a composition bias toward polar residues. Composition is skewed to pro residues over residues 684–713 (YPQP…PAPP) and 729–751 (KEPP…PPPM). 2 stretches are compositionally biased toward basic and acidic residues: residues 798 to 807 (LRKDRAEKEL) and 854 to 864 (NSREETPKDQE). Residues 900–909 (RVSSSEQNSA) show a composition bias toward polar residues. Ser950 bears the Phosphoserine mark. Residues 985-1063 (EGIHSHDGSD…HLNRHLVNVY (79 aa)) form an interaction with RCOR1 region. Residues 1036–1058 (FVCIFCDRSFRKEKDYSKHLNRH) form a C2H2-type 9 zinc finger.

Isoform 1 and isoform 2 form heterodimers. Isoform 2: Forms homodimers and homooligomers; binds to the neuron-restrictive silencer element (NRSE) as monomer. Interacts with SIN3A, SIN3B and RCOR1. Interacts with CDYL. Interacts with EHMT1 and EHMT2 only in the presence of CDYL. Part of a complex containing at least CDYL, REST, WIZ, SETB1, EHMT1 and EHMT2. Interacts (via zinc-finger DNA-binding domain) with ZFP90 (via N- and C-termini); the interaction inhibits REST repressor activity. Interacts (via C2H2-type zinc finger 5) with PRICKLE1. Interacts with FBXW11 and BTRC. Interacts with USP7. O-glycosylated. In terms of processing, phosphorylated; phosphorylation is required for ubiquitination. Post-translationally, ubiquitinated; ubiquitination is mediated by BTRC and leads to proteasomal degradation in G2 phase. Ubiquitination increases during neuronal differentiation. Deubiquitinated by USP7; leading to its stabilization and promoting the maintenance of neural progenitor cells. In terms of tissue distribution, expressed in the hippocampus, including quiescent neuronal progenitor (QNP) cells, transient-amplifying progenitor (TAP) cells, neuroblasts and mature neurons (at protein level). Expressed in embryonic stem cells (at protein level). Expressed in many non-neuronal tissues including the heart and liver. Abundantly expressed in osteoblastic lineage cells. Expressed in the spleen, kidney, blood cells, cortex, neocortex and in the utricle, saccule and organ of Corti of the inner ear. Isoform 2: Expressed in the cortex, neocortex and in the utricle, saccule and organ of Corti of the inner ear.

Its subcellular location is the nucleus. The protein resides in the cytoplasm. Transcriptional repressor which binds neuron-restrictive silencer element (NRSE) and represses neuronal gene transcription in non-neuronal cells. Restricts the expression of neuronal genes by associating with two distinct corepressors, SIN3A and RCOR1, which in turn recruit histone deacetylase to the promoters of REST-regulated genes. Mediates repression by recruiting the BHC complex at RE1/NRSE sites which acts by deacetylating and demethylating specific sites on histones, thereby acting as a chromatin modifier. Transcriptional repression by REST-CDYL via the recruitment of histone methyltransferase EHMT2 may be important in transformation suppression. Represses the expression of SRRM4 in non-neural cells to prevent the activation of neural-specific splicing events and to prevent production of REST isoform 2. Repressor activity may be inhibited by forming heterodimers with isoform 2, thereby preventing binding to NRSE or binding to corepressors and leading to derepression of target genes. Also maintains repression of neuronal genes in neural stem cells, and allows transcription and differentiation into neurons by dissociation from RE1/NRSE sites of target genes. Thereby is involved in maintaining the quiescent state of adult neural stem cells and preventing premature differentiation into mature neurons. Plays a role in the developmental switch in synaptic NMDA receptor composition during postnatal development, by repressing GRIN2B expression and thereby altering NMDA receptor properties from containing primarily GRIN2B to primarily GRIN2A subunits. Acts as a regulator of osteoblast differentiation. Key repressor of gene expression in hypoxia; represses genes in hypoxia by direct binding to an RE1/NRSE site on their promoter regions. May also function in stress resistance in the brain during aging; possibly by regulating expression of genes involved in cell death and in the stress response. Repressor of gene expression in the hippocampus after ischemia by directly binding to RE1/NRSE sites and recruiting SIN3A and RCOR1 to promoters of target genes, thereby promoting changes in chromatin modifications and ischemia-induced cell death. After ischemia, might play a role in repression of miR-132 expression in hippocampal neurons, thereby leading to neuronal cell death. Its function is as follows. Binds to the 3' region of the neuron-restrictive silencer element (NRSE), with lower affinity than isoform 1. Exhibits weaker repressor activity compared to isoform 1. May negatively regulate the repressor activity of isoform 1 by binding to isoform 1, thereby preventing its binding to NRSE and leading to derepression of target genes. However, in another study, does not appear to be implicated in repressor activity of a NRSE motif-containing reporter construct nor in inhibitory activity on the isoform 1 transcriptional repressor activity. Post-transcriptional inactivation of REST by SRRM4-dependent alternative splicing into isoform 2 is required in mechanosensory hair cells in the inner ear for derepression of neuronal genes, maintenance of hair cells and hearing. This chain is RE1-silencing transcription factor (Rest), found in Mus musculus (Mouse).